The sequence spans 239 residues: Guanylate kinase (239 aa).

A Guanylate kinase-like domain is found at 55–235; sequence GRIFVITGPS…TLAELQAILL (181 aa). 62 to 69 contacts ATP; it reads GPSGVGKS.

This sequence belongs to the guanylate kinase family.

The protein localises to the cytoplasm. The catalysed reaction is GMP + ATP = GDP + ADP. Its function is as follows. Essential for recycling GMP and indirectly, cGMP. In Mycoplasma pneumoniae (strain ATCC 29342 / M129 / Subtype 1) (Mycoplasmoides pneumoniae), this protein is Guanylate kinase (gmk).